The chain runs to 279 residues: Fatty acid metabolism regulator protein (279 aa).

The HTH gntR-type domain maps to 6 to 74 (KSPAGFAEKY…HGKPTKVNQF (69 aa)). The segment at residues 34 to 53 (ERELSELIGVTRTTLREVLQ) is a DNA-binding region (H-T-H motif).

In terms of assembly, homodimer.

Its subcellular location is the cytoplasm. In terms of biological role, multifunctional regulator of fatty acid metabolism. This chain is Fatty acid metabolism regulator protein, found in Vibrio vulnificus (strain CMCP6).